Here is a 620-residue protein sequence, read N- to C-terminus: MAASCNLDVIGEDGGCALTGGWQPGAFERPYMGFDARLLSTNSSLCSELIFSAHLMQISPTPQPREQVDVCEDPDNDPPEPSCAQFVDAVADSLALDKLCLICRTIDLYRRQFGLSPQWIADYAMLCTKTLAAPPCAVATVVAAFEFVYLMDKHYLRRGKTTLVGAFARRVLTLVDIQRHFFLHVCFRTDGGVPRCAASGTAPAATAMAGLGMADKVQYSNYSFLVQSSTRAMLLTVADVPSGDDGALQAVPHGRHGAGRPADGGGGVFGPKQQSTVAALMSWKECAKMIDCSGSERRRPGATMTCCERARADDDEYERQLLSTENTYLGSADNQAEGGNDTHLKWGYADLTLLLLSQSSTWEASEKTSLASQSRRACVEEYWASHRTVLARDTAPRFARFVDADAVPDTATGPVLATTLKHVRSRGRTCAECVLCNLILTREHWLALRRFKRDVISYSSNNANLFDCISPVLSALSDANSEPLAGDCGVGGGGTCPEDSGRFLELMHAAGTEAIYKHLFCDPMCALVELQTNPSVLFSPIGPPPEPDEIELQKARLASENWFSGRVCAGLWALAFTFKTYQIFTPKPTACAAFIKDAGLLLRRHNLPLISLEHTLCNYV.

12 residues coordinate Zn(2+): Cys100, Cys103, His180, Cys186, Cys306, Cys307, Cys433, Cys436, His518, Cys525, Cys568, and His605. Zinc finger stretches follow at residues Cys100–Cys186, Cys306–His605, and Cys433–Cys525.

This sequence belongs to the herpesviridae UL32 protein family.

Its subcellular location is the host cytoplasm. The protein localises to the host nucleus. Its function is as follows. Plays a role in efficient localization of neo-synthesized capsids to nuclear replication compartments, thereby controlling cleavage and packaging of virus genomic DNA. This chain is Packaging protein UL32 homolog, found in Equus caballus (Horse).